A 363-amino-acid polypeptide reads, in one-letter code: Phosphoserine aminotransferase (363 aa).

Residue Arg42 coordinates L-glutamate. Residues 76–77, Trp102, Thr156, Asp175, and Gln198 each bind pyridoxal 5'-phosphate; that span reads GR. Lys199 carries the N6-(pyridoxal phosphate)lysine modification. Position 240–241 (240–241) interacts with pyridoxal 5'-phosphate; it reads NT.

It belongs to the class-V pyridoxal-phosphate-dependent aminotransferase family. SerC subfamily. Homodimer. The cofactor is pyridoxal 5'-phosphate.

It is found in the cytoplasm. It carries out the reaction O-phospho-L-serine + 2-oxoglutarate = 3-phosphooxypyruvate + L-glutamate. The catalysed reaction is 4-(phosphooxy)-L-threonine + 2-oxoglutarate = (R)-3-hydroxy-2-oxo-4-phosphooxybutanoate + L-glutamate. It participates in amino-acid biosynthesis; L-serine biosynthesis; L-serine from 3-phospho-D-glycerate: step 2/3. Its pathway is cofactor biosynthesis; pyridoxine 5'-phosphate biosynthesis; pyridoxine 5'-phosphate from D-erythrose 4-phosphate: step 3/5. Catalyzes the reversible conversion of 3-phosphohydroxypyruvate to phosphoserine and of 3-hydroxy-2-oxo-4-phosphonooxybutanoate to phosphohydroxythreonine. This chain is Phosphoserine aminotransferase, found in Shewanella sp. (strain MR-4).